Reading from the N-terminus, the 2210-residue chain is Genome polyprotein (2210 aa).

Residues 1 to 24 (MAPVVSRDQCKPKTPKPHRPAPPH) are disordered. A compositionally biased stretch (basic residues) spans 13–22 (KTPKPHRPAP). In terms of domain architecture, SF3 helicase spans 426–585 (SNKIVELSTM…ADFLRQHPGV (160 aa)). Residue 456–463 (GPPGHGKS) participates in ATP binding. Y940 carries the post-translational modification O-(5'-phospho-RNA)-tyrosine. Residues 991-1136 (GNNCDDIPLH…KVITPITPEP (146 aa)) enclose the Peptidase C24 domain. Active-site for 3CLpro activity residues include H1025, D1039, and C1103. A RdRp catalytic domain is found at 1379–1501 (DHCLELDYSK…TIPSHLTKSI (123 aa)). Residues 1656–1685 (LIREGNMSDNKSIPEQQHESSRAMDAGATG) are disordered.

In terms of processing, specific enzymatic cleavages by its own cysteine protease yield mature proteins. The protease cleaves itself from the nascent polyprotein autocatalytically. Precursor p41 can be cleaved by viral 3CLpro into protein p19 and VPg, or cleaved by host protease into protein p23/2 and protein p18. Post-translationally, VPg is uridylylated by the polymerase and is covalently attached to the 5'-end of the polyadenylated genomic and subgenomic RNAs. This uridylylated form acts as a nucleotide-peptide primer for the polymerase.

It is found in the virion. It localises to the host cytoplasm. It carries out the reaction a ribonucleoside 5'-triphosphate + H2O = a ribonucleoside 5'-diphosphate + phosphate + H(+). The enzyme catalyses Endopeptidase with a preference for cleavage when the P1 position is occupied by Glu-|-Xaa and the P1' position is occupied by Gly-|-Yaa.. It catalyses the reaction RNA(n) + a ribonucleoside 5'-triphosphate = RNA(n+1) + diphosphate. In terms of biological role, displays NTPase activity, but no helicase activity. Induces the formation of convoluted membranes derived from the host ER. These remodeled membranes probably form the viral factories that contain the replication complex. Together with NS2 and NS4, initiates the formation of the replication complex. Viral genome-linked protein is covalently linked to the 5'-end of the positive-strand, negative-strand genomic RNAs and subgenomic RNA. Acts as a genome-linked replication primer. May recruit ribosome to viral RNA thereby promoting viral proteins translation. Interacts with host translation initiation complex to allow the translation of viral proteins. Its function is as follows. Processes the polyprotein. 3CLpro-RdRp is first released by autocleavage, then all other proteins are cleaved. May cleave polyadenylate-binding protein thereby inhibiting cellular translation. Functionally, replicates genomic and antigenomic RNA by recognizing replications specific signals. Also transcribes a subgenomic mRNA by initiating RNA synthesis internally on antigenomic RNA. This sgRNA codes for structural proteins. Catalyzes the covalent attachment VPg with viral RNAs. In terms of biological role, capsid protein self assembles to form an icosahedral capsid with a T=3 symmetry, about 35 nm in diameter, and consisting of 180 capsid proteins. A smaller form of capsid with a diameter of 23 nm might be capsid proteins assembled as icosahedron with T=1 symmetry. The capsid encapsulate VP2 proteins and genomic or subgenomic RNA. Attaches virion to target cells by binding histo-blood group antigens, inducing endocytosis of the viral particle. Acidification of the endosome induces conformational change of capsid protein thereby injecting virus genomic RNA into host cytoplasm. This is Genome polyprotein from Bovine enteric calicivirus NB (isolate Bovine/United States/N ebraska/1980) (BEC-NB).